The primary structure comprises 435 residues: Trigger factor (435 aa).

In terms of domain architecture, PPIase FKBP-type spans 163 to 248 (GDRVTIDFEG…LTRIEAQNLP (86 aa)).

This sequence belongs to the FKBP-type PPIase family. Tig subfamily.

It localises to the cytoplasm. The catalysed reaction is [protein]-peptidylproline (omega=180) = [protein]-peptidylproline (omega=0). Involved in protein export. Acts as a chaperone by maintaining the newly synthesized protein in an open conformation. Functions as a peptidyl-prolyl cis-trans isomerase. In Leptothrix cholodnii (strain ATCC 51168 / LMG 8142 / SP-6) (Leptothrix discophora (strain SP-6)), this protein is Trigger factor.